Reading from the N-terminus, the 126-residue chain is UPF0538 protein C2orf76 homolog (126 aa).

This sequence belongs to the UPF0538 family.

The chain is UPF0538 protein C2orf76 homolog from Bos taurus (Bovine).